A 366-amino-acid chain; its full sequence is GTPase Obg (366 aa).

The Obg domain maps to 1-162; sequence MRFVDEAVIK…KSLRLELKIL (162 aa). Residues 125 to 150 are disordered; that stretch reads RGGKGNEHFKSSTMQAPRFSQPGEPG. The region spanning 163-335 is the OBG-type G domain; it reads ADAGLLGLPN…VVSEMWRMLA (173 aa). GTP is bound by residues 169 to 176, 194 to 198, 218 to 221, 288 to 291, and 316 to 318; these read GLPNAGKS, FTTLV, DIPG, NKID, and SAL. Residues serine 176 and threonine 196 each coordinate Mg(2+).

It belongs to the TRAFAC class OBG-HflX-like GTPase superfamily. OBG GTPase family. Monomer. Mg(2+) is required as a cofactor.

The protein resides in the cytoplasm. Its function is as follows. An essential GTPase which binds GTP, GDP and possibly (p)ppGpp with moderate affinity, with high nucleotide exchange rates and a fairly low GTP hydrolysis rate. Plays a role in control of the cell cycle, stress response, ribosome biogenesis and in those bacteria that undergo differentiation, in morphogenesis control. In Oleidesulfovibrio alaskensis (strain ATCC BAA-1058 / DSM 17464 / G20) (Desulfovibrio alaskensis), this protein is GTPase Obg.